A 453-amino-acid polypeptide reads, in one-letter code: Adenosylmethionine-8-amino-7-oxononanoate aminotransferase (453 aa).

Pyridoxal 5'-phosphate is bound at residue glycine 118–alanine 119. Position 151 (tyrosine 151) interacts with substrate. Aspartate 257 is a pyridoxal 5'-phosphate binding site. Substrate-binding residues include lysine 286, glycine 321, and arginine 416. Lysine 286 is modified (N6-(pyridoxal phosphate)lysine).

It belongs to the class-III pyridoxal-phosphate-dependent aminotransferase family. BioA subfamily. In terms of assembly, homodimer. The cofactor is pyridoxal 5'-phosphate.

Its subcellular location is the cytoplasm. The enzyme catalyses (8S)-8-amino-7-oxononanoate + S-adenosyl-L-methionine = S-adenosyl-4-methylsulfanyl-2-oxobutanoate + (7R,8S)-7,8-diammoniononanoate. The protein operates within cofactor biosynthesis; biotin biosynthesis; 7,8-diaminononanoate from 8-amino-7-oxononanoate (SAM route): step 1/1. In terms of biological role, catalyzes the transfer of the alpha-amino group from S-adenosyl-L-methionine (SAM) to 7-keto-8-aminopelargonic acid (KAPA) to form 7,8-diaminopelargonic acid (DAPA). It is the only aminotransferase known to utilize SAM as an amino donor. The sequence is that of Adenosylmethionine-8-amino-7-oxononanoate aminotransferase from Aquifex aeolicus (strain VF5).